The primary structure comprises 154 residues: Nuclear cap-binding protein subunit 2-A (154 aa).

MRNA-binding positions include Y10, Y33, 102-106, 113-117, and 123-124; these read RVDWD, RQYGR, and QV. The RRM domain occupies 30-108; it reads STLYVGNLSF…RLIRVDWDAG (79 aa).

Belongs to the RRM NCBP2 family. Component of the nuclear cap-binding complex (CBC), a heterodimer composed of Cbp80 and Cbp20 that interacts with m7GpppG-capped RNA. Interacts with Ars2.

The protein localises to the nucleus. In terms of biological role, component of the cap-binding complex (CBC), which binds co-transcriptionally to the 5' cap of pre-mRNAs and is involved in various processes such as pre-mRNA splicing and RNA-mediated gene silencing (RNAi). The CBC complex is involved in miRNA-mediated RNA interference via its interaction with Ars2 and is required for primary microRNAs (miRNAs) processing. Also involved in innate immunity via the short interfering RNAs (siRNAs) processing machinery by restricting the viral RNA production. In the CBC complex, Cbp20 recognizes and binds capped RNAs (m7GpppG-capped RNA) but requires Cbp80 to stabilize the movement of its N-terminal loop and lock the CBC into a high affinity cap-binding state with the cap structure. This chain is Nuclear cap-binding protein subunit 2-A (Cbp20-A), found in Drosophila virilis (Fruit fly).